Here is a 537-residue protein sequence, read N- to C-terminus: Oviduct-specific glycoprotein (537 aa).

The signal sequence occupies residues 1–18 (LLLCVGLLLVLKHHDGAA). In terms of domain architecture, GH18 spans 19 to 382 (HKLVCYFTNW…HTLNNLLVND (364 aa)). The cysteines at positions 23 and 48 are disulfide-linked. Chitin is bound by residues 68–69 (PQ), 95–98 (GGWN), Tyr139, 208–211 (LSYD), and Trp352. An N-linked (GlcNAc...) asparagine glycan is attached at Asn399. Disordered stretches follow at residues 446-475 (EIAT…GEKP) and 498-537 (TGQK…ERRL). A compositionally biased stretch (basic and acidic residues) spans 528-537 (GRAETLERRL).

The protein belongs to the glycosyl hydrolase 18 family. In terms of tissue distribution, oviduct.

It localises to the cytoplasmic vesicle. The protein resides in the secretory vesicle. Functionally, binds to oocyte zona pellucida in vivo. May play a role in the fertilization process and/or early embryonic development. The polypeptide is Oviduct-specific glycoprotein (OVGP1) (Bos taurus (Bovine)).